We begin with the raw amino-acid sequence, 83 residues long: Defensin-2 (83 aa).

Residues 1-33 (MAGKGVGTPLSALFLLVLLVVTIGMMEVQVAEG) form the signal peptide. 4 disulfides stabilise this stretch: Cys-36-Cys-82, Cys-47-Cys-67, Cys-53-Cys-76, and Cys-57-Cys-78.

This sequence belongs to the DEFL family.

The protein resides in the secreted. In terms of biological role, plant defense peptide. Has antifungal activity. This Pinus sylvestris (Scotch pine) protein is Defensin-2.